Consider the following 712-residue polypeptide: Protein phosphatase 1 regulatory subunit 37 (712 aa).

The span at 1–12 (MEIPPQEAPPGP) shows a compositional bias: pro residues. Residues 1–47 (MEIPPQEAPPGPGADADADAEAETEEASAEAESPTGTSPPADGRLKA) form a disordered region. Acidic residues predominate over residues 16-29 (ADADAEAETEEASA). 2 positions are modified to phosphoserine: serine 56 and serine 62. LRR repeat units follow at residues 226-246 (SLAVLHLENASLSGRPLMLLA), 254-275 (NLRELYLADNKLNGLQDSAQLG), 283-303 (SLQILDLRNNHVLDSGLAYIC), 312-332 (GLVTLVLWNNQLTHTGMAFLG), and 340-360 (SLETLNLGHNPIGNEGVRNLK). Residues 492–680 (ESGELPAVGS…PPGLEAKGGS (189 aa)) are disordered. Positions 514–531 (SDSDSDSDREEQEEEEED) are enriched in acidic residues. Serine 583 bears the Phosphoserine mark. The span at 605–626 (PPVPPTFVSSPPPSPPSPPASP) shows a compositional bias: pro residues. The segment covering 639 to 651 (SEAQPQLEPSQAG) has biased composition (polar residues).

The protein belongs to the PPP1R37 family. In terms of assembly, interacts with PPP1CA.

Functionally, inhibits phosphatase activity of protein phosphatase 1 (PP1) complexes. This is Protein phosphatase 1 regulatory subunit 37 (Ppp1r37) from Mus musculus (Mouse).